The sequence spans 457 residues: Trigger factor (457 aa).

The region spanning 162–243 (GDFVSIDLSA…VQTVKERELP (82 aa)) is the PPIase FKBP-type domain. Positions 434-457 (AELFGSSEDETEADASDSAESEDK) are disordered. Over residues 440–457 (SEDETEADASDSAESEDK) the composition is skewed to acidic residues.

The protein belongs to the FKBP-type PPIase family. Tig subfamily.

The protein localises to the cytoplasm. It carries out the reaction [protein]-peptidylproline (omega=180) = [protein]-peptidylproline (omega=0). Its function is as follows. Involved in protein export. Acts as a chaperone by maintaining the newly synthesized protein in an open conformation. Functions as a peptidyl-prolyl cis-trans isomerase. This chain is Trigger factor, found in Rhodococcus erythropolis (strain PR4 / NBRC 100887).